A 280-amino-acid chain; its full sequence is Bis(5'-nucleosyl)-tetraphosphatase, symmetrical (280 aa).

Belongs to the Ap4A hydrolase family.

The enzyme catalyses P(1),P(4)-bis(5'-adenosyl) tetraphosphate + H2O = 2 ADP + 2 H(+). Functionally, hydrolyzes diadenosine 5',5'''-P1,P4-tetraphosphate to yield ADP. This is Bis(5'-nucleosyl)-tetraphosphatase, symmetrical from Escherichia coli O17:K52:H18 (strain UMN026 / ExPEC).